We begin with the raw amino-acid sequence, 199 residues long: Holliday junction branch migration complex subunit RuvA (199 aa).

The domain I stretch occupies residues methionine 1–alanine 64. Residues serine 65 to threonine 143 form a domain II region. Residues valine 144 to alanine 152 form a flexible linker region. The domain III stretch occupies residues alanine 152–alanine 199.

This sequence belongs to the RuvA family. Homotetramer. Forms an RuvA(8)-RuvB(12)-Holliday junction (HJ) complex. HJ DNA is sandwiched between 2 RuvA tetramers; dsDNA enters through RuvA and exits via RuvB. An RuvB hexamer assembles on each DNA strand where it exits the tetramer. Each RuvB hexamer is contacted by two RuvA subunits (via domain III) on 2 adjacent RuvB subunits; this complex drives branch migration. In the full resolvosome a probable DNA-RuvA(4)-RuvB(12)-RuvC(2) complex forms which resolves the HJ.

It is found in the cytoplasm. Functionally, the RuvA-RuvB-RuvC complex processes Holliday junction (HJ) DNA during genetic recombination and DNA repair, while the RuvA-RuvB complex plays an important role in the rescue of blocked DNA replication forks via replication fork reversal (RFR). RuvA specifically binds to HJ cruciform DNA, conferring on it an open structure. The RuvB hexamer acts as an ATP-dependent pump, pulling dsDNA into and through the RuvAB complex. HJ branch migration allows RuvC to scan DNA until it finds its consensus sequence, where it cleaves and resolves the cruciform DNA. The sequence is that of Holliday junction branch migration complex subunit RuvA from Aromatoleum aromaticum (strain DSM 19018 / LMG 30748 / EbN1) (Azoarcus sp. (strain EbN1)).